The following is a 307-amino-acid chain: Cytochrome c1, heme protein, mitochondrial (307 aa).

A mitochondrion-targeting transit peptide spans 1 to 56 (MFQFVKKKNEFLKFARLGSRAFTQNAQKTHSKGSNIALVSSSLLSVGMIALYYNVY). Residues 57–269 (GPSLSAGTPK…EPELDIRKKM (213 aa)) lie on the Mitochondrial intermembrane side of the membrane. Residues 89 to 259 (ASLRRGFQVY…DVVNFLHWAS (171 aa)) form the Cytochrome c domain. The heme c site is built by Cys102, Cys105, His106, and Met225. A helical membrane pass occupies residues 270 to 287 (GFQVITVLTILTALSMWY). The Mitochondrial matrix segment spans residues 288-307 (KRFKWTPIKNRKIFYQRPIK).

Belongs to the cytochrome c family. In terms of assembly, component of the ubiquinol-cytochrome c oxidoreductase (cytochrome b-c1 complex, complex III, CIII), a multisubunit enzyme composed of 3 respiratory subunits cytochrome b, cytochrome c1 and Rieske protein, 2 core protein subunits, and additional low-molecular weight protein subunits. The complex exists as an obligatory dimer and forms supercomplexes (SCs) in the inner mitochondrial membrane with cytochrome c oxidase (complex IV, CIV). Heme c serves as cofactor.

It is found in the mitochondrion inner membrane. It carries out the reaction a quinol + 2 Fe(III)-[cytochrome c](out) = a quinone + 2 Fe(II)-[cytochrome c](out) + 2 H(+)(out). Functionally, component of the ubiquinol-cytochrome c oxidoreductase, a multisubunit transmembrane complex that is part of the mitochondrial electron transport chain which drives oxidative phosphorylation. The respiratory chain contains 3 multisubunit complexes succinate dehydrogenase (complex II, CII), ubiquinol-cytochrome c oxidoreductase (cytochrome b-c1 complex, complex III, CIII) and cytochrome c oxidase (complex IV, CIV), that cooperate to transfer electrons derived from NADH and succinate to molecular oxygen, creating an electrochemical gradient over the inner membrane that drives transmembrane transport and the ATP synthase. The cytochrome b-c1 complex catalyzes electron transfer from ubiquinol to cytochrome c, linking this redox reaction to translocation of protons across the mitochondrial inner membrane, with protons being carried across the membrane as hydrogens on the quinol. In the process called Q cycle, 2 protons are consumed from the matrix, 4 protons are released into the intermembrane space and 2 electrons are passed to cytochrome c. Cytochrome c1 is a catalytic core subunit containing a c-type heme. It transfers electrons from the [2Fe-2S] iron-sulfur cluster of the Rieske protein to cytochrome c. This is Cytochrome c1, heme protein, mitochondrial (cyt1) from Schizosaccharomyces pombe (strain 972 / ATCC 24843) (Fission yeast).